Here is a 436-residue protein sequence, read N- to C-terminus: Aminopeptidase C (436 aa).

Catalysis depends on residues cysteine 68, histidine 356, and asparagine 378.

Belongs to the peptidase C1 family. As to quaternary structure, homohexamer.

The catalysed reaction is Inactivates bleomycin B2 (a cytotoxic glycometallopeptide) by hydrolysis of a carboxyamide bond of beta-aminoalanine, but also shows general aminopeptidase activity. The specificity varies somewhat with source, but amino acid arylamides of Met, Leu and Ala are preferred.. Hydrolyzes naphthylamide-substituted amino acids as well as di- and tripeptides in which the half-cystine residue is involved in a disulfide loop, notably in oxytocin and vasopressin. Also has a bleomycin hydrolase activity. This chain is Aminopeptidase C (pepC), found in Lactococcus lactis subsp. lactis (strain IL1403) (Streptococcus lactis).